A 131-amino-acid polypeptide reads, in one-letter code: Large ribosomal subunit protein bL17 (131 aa).

Belongs to the bacterial ribosomal protein bL17 family. Part of the 50S ribosomal subunit. Contacts protein L32.

The sequence is that of Large ribosomal subunit protein bL17 from Bordetella avium (strain 197N).